The following is a 164-amino-acid chain: Nucleotide-binding protein Emin_0136 (164 aa).

Belongs to the YajQ family.

Nucleotide-binding protein. This Elusimicrobium minutum (strain Pei191) protein is Nucleotide-binding protein Emin_0136.